A 90-amino-acid polypeptide reads, in one-letter code: Small ribosomal subunit protein uS15c (90 aa).

Belongs to the universal ribosomal protein uS15 family. Part of the 30S ribosomal subunit.

The protein resides in the plastid. Its subcellular location is the chloroplast. This chain is Small ribosomal subunit protein uS15c (rps15), found in Populus alba (White poplar).